Consider the following 144-residue polypeptide: Large ribosomal subunit protein uL16 (144 aa).

Basic residues predominate over residues 1–19 (MLLPKRVKYRRQHRPKTTG). A disordered region spans residues 1 to 23 (MLLPKRVKYRRQHRPKTTGRSKG).

This sequence belongs to the universal ribosomal protein uL16 family. As to quaternary structure, part of the 50S ribosomal subunit.

In terms of biological role, binds 23S rRNA and is also seen to make contacts with the A and possibly P site tRNAs. The sequence is that of Large ribosomal subunit protein uL16 from Staphylococcus epidermidis (strain ATCC 35984 / DSM 28319 / BCRC 17069 / CCUG 31568 / BM 3577 / RP62A).